The primary structure comprises 1463 residues: Nitric oxide synthase 1 (1463 aa).

The interaction with NOSIP stretch occupies residues 1–200; sequence MESHMFSVQQ…LQGSGENNKL (200 aa). The PDZ domain occupies 17 to 99; the sequence is SVRLFKRKVG…ETHVVLILRG (83 aa). Disordered stretches follow at residues 110–194, 215–250, and 268–298; these read TFTG…LQGS, GKAINGGGPAKTETKDVEVQVDRDPDSKSHKPLPLG, and VVLNNPYSEKEQPSASGKQSPTKNGSPSKCP. The segment at 158–240 is DYNLL1/PIN/nNOS-inhibiting protein-binding; that stretch reads PDPGQEASSL…VEVQVDRDPD (83 aa). Basic and acidic residues predominate over residues 226 to 243; it reads TETKDVEVQVDRDPDSKS. Over residues 280–294 the composition is skewed to polar residues; sequence PSASGKQSPTKNGSP. Ser334 serves as a coordination point for (6R)-L-erythro-5,6,7,8-tetrahydrobiopterin. Cys415 serves as a coordination point for heme b. The L-arginine site is built by Gln478, Trp587, Tyr588, and Glu592. 3 residues coordinate (6R)-L-erythro-5,6,7,8-tetrahydrobiopterin: Val677, Trp678, and Phe691. Residue Tyr706 coordinates heme b. Residues 725 to 745 are calmodulin-binding; that stretch reads KRRAIGFKKLAEAVKFSAKLM. Residues 755 to 969 form the Flavodoxin-like domain; it reads ATILYATETG…AFRTWAKKVF (215 aa). 8 residues coordinate FMN: Thr761, Glu762, Thr763, Lys765, Ser766, Ser807, Thr808, and Gly812. Ser881, Ser891, and Ser892 each carry phosphoserine. Residues Ser920, His925, Cys927, Glu953, and Gln957 each coordinate FMN. Positions 1024–1271 constitute an FAD-binding FR-type domain; sequence KRVSAARLLS…VRGAPSFHLP (248 aa). An NADP(+)-binding site is contributed by Arg1044. Positions 1066, 1207, 1208, 1209, 1210, 1225, and 1227 each coordinate FAD. Ser1230 lines the NADP(+) pocket. Residues Tyr1231, Val1244, Cys1245, and Ser1246 each contribute to the FAD site. NADP(+) is bound by residues Thr1285, Arg1318, Ser1347, Arg1348, Lys1354, Tyr1356, Gln1358, Asp1391, Thr1432, and Arg1434.

Belongs to the NOS family. As to quaternary structure, homodimer. Interacts with DLG4; the interaction possibly being prevented by the association between NOS1 and CAPON. Forms a ternary complex with CAPON and RASD1. Forms a ternary complex with CAPON and SYN1. Interacts with ZDHHC23. Interacts with NOSIP; which may impair its synaptic location. Interacts with HTR4. Interacts with SLC6A4. Interacts with VAC14. Interacts (via N-terminal domain) with DLG4 (via N-terminal tandem pair of PDZ domains). Interacts with SLC6A4. Forms a complex with ASL, ASS1 and SLC7A1; the complex regulates cell-autonomous L-arginine synthesis and citrulline recycling while channeling extracellular L-arginine to nitric oxide synthesis pathway. Interacts with DMD; localizes NOS1 to sarcolemma in muscle cells. Interacts with DYNLL1; inhibits the nitric oxide synthase activity. Requires heme b as cofactor. It depends on FAD as a cofactor. The cofactor is FMN. (6R)-L-erythro-5,6,7,8-tetrahydrobiopterin is required as a cofactor. Ubiquitinated; mediated by STUB1/CHIP in the presence of Hsp70 and Hsp40 (in vitro).

The protein resides in the cell membrane. It is found in the sarcolemma. It localises to the cell projection. The protein localises to the dendritic spine. The catalysed reaction is 2 L-arginine + 3 NADPH + 4 O2 + H(+) = 2 L-citrulline + 2 nitric oxide + 3 NADP(+) + 4 H2O. Its activity is regulated as follows. Stimulated by calcium/calmodulin. Inhibited by DYNLL1 that prevents the dimerization of the protein. Inhibited by NOSIP. In terms of biological role, produces nitric oxide (NO) which is a messenger molecule with diverse functions throughout the body. In the brain and peripheral nervous system, NO displays many properties of a neurotransmitter. Probably has nitrosylase activity and mediates cysteine S-nitrosylation of cytoplasmic target proteins such SRR. The polypeptide is Nitric oxide synthase 1 (NOS1) (Ovis aries (Sheep)).